The primary structure comprises 734 residues: Photosystem I P700 chlorophyll a apoprotein A2 (734 aa).

The next 8 membrane-spanning stretches (helical) occupy residues 46–69, 135–158, 175–199, 273–291, 330–353, 369–395, 417–439, and 517–535; these read IFAS…FHVA, LYTG…LHLQ, LNHH…HVAI, MAHH…GHMY, IHFQ…QHMY, AALY…IFFI, AIIS…LYVH, and FLVH…LILV. Positions 559 and 568 each coordinate [4Fe-4S] cluster. 2 helical membrane-spanning segments follow: residues 575-596 and 643-665; these read AFYL…YWHW and LSVW…MFLI. The chlorophyll a site is built by His-654, Met-662, and Tyr-670. Trp-671 contributes to the phylloquinone binding site. A helical membrane pass occupies residues 707–727; it reads LVGLAHFSVGYIFTYAAFLIA.

This sequence belongs to the PsaA/PsaB family. As to quaternary structure, the PsaA/B heterodimer binds the P700 chlorophyll special pair and subsequent electron acceptors. PSI consists of a core antenna complex that captures photons, and an electron transfer chain that converts photonic excitation into a charge separation. The eukaryotic PSI reaction center is composed of at least 11 subunits. The cofactor is P700 is a chlorophyll a/chlorophyll a' dimer, A0 is one or more chlorophyll a, A1 is one or both phylloquinones and FX is a shared 4Fe-4S iron-sulfur center..

It is found in the plastid. It localises to the chloroplast thylakoid membrane. The enzyme catalyses reduced [plastocyanin] + hnu + oxidized [2Fe-2S]-[ferredoxin] = oxidized [plastocyanin] + reduced [2Fe-2S]-[ferredoxin]. PsaA and PsaB bind P700, the primary electron donor of photosystem I (PSI), as well as the electron acceptors A0, A1 and FX. PSI is a plastocyanin-ferredoxin oxidoreductase, converting photonic excitation into a charge separation, which transfers an electron from the donor P700 chlorophyll pair to the spectroscopically characterized acceptors A0, A1, FX, FA and FB in turn. Oxidized P700 is reduced on the lumenal side of the thylakoid membrane by plastocyanin. This Triticum aestivum (Wheat) protein is Photosystem I P700 chlorophyll a apoprotein A2.